Reading from the N-terminus, the 238-residue chain is Protein-lysine N-methyltransferase efm4 (238 aa).

Belongs to the class I-like SAM-binding methyltransferase superfamily. EFM4 family.

It is found in the cytoplasm. It localises to the nucleus. Functionally, S-adenosyl-L-methionine-dependent protein-lysine N-methyltransferase that mono- and dimethylates elongation factor 1-alpha at 'Lys-316'. May play a role in intracellular transport. The protein is Protein-lysine N-methyltransferase efm4 of Schizosaccharomyces pombe (strain 972 / ATCC 24843) (Fission yeast).